A 545-amino-acid chain; its full sequence is 2-succinyl-5-enolpyruvyl-6-hydroxy-3-cyclohexene-1-carboxylate synthase (545 aa).

Polar residues predominate over residues Gln-170–Ser-185. Positions Gln-170 to Leu-193 are disordered.

Belongs to the TPP enzyme family. MenD subfamily. Homodimer. The cofactor is Mg(2+). Mn(2+) is required as a cofactor. Requires thiamine diphosphate as cofactor.

The enzyme catalyses isochorismate + 2-oxoglutarate + H(+) = 5-enolpyruvoyl-6-hydroxy-2-succinyl-cyclohex-3-ene-1-carboxylate + CO2. Its pathway is quinol/quinone metabolism; 1,4-dihydroxy-2-naphthoate biosynthesis; 1,4-dihydroxy-2-naphthoate from chorismate: step 2/7. The protein operates within cofactor biosynthesis; phylloquinone biosynthesis. Its function is as follows. Catalyzes the thiamine diphosphate-dependent decarboxylation of 2-oxoglutarate and the subsequent addition of the resulting succinic semialdehyde-thiamine pyrophosphate anion to isochorismate to yield 2-succinyl-5-enolpyruvyl-6-hydroxy-3-cyclohexene-1-carboxylate (SEPHCHC). The chain is 2-succinyl-5-enolpyruvyl-6-hydroxy-3-cyclohexene-1-carboxylate synthase from Parasynechococcus marenigrum (strain WH8102).